Reading from the N-terminus, the 404-residue chain is Probable tRNA sulfurtransferase (404 aa).

In terms of domain architecture, THUMP spans 61-166 (QTLVTGLPKI…HDATYMMAQV (106 aa)). Residues 184 to 185 (ML), 209 to 210 (HF), Arg266, Gly288, and Gln297 contribute to the ATP site.

It belongs to the ThiI family.

The protein resides in the cytoplasm. The catalysed reaction is [ThiI sulfur-carrier protein]-S-sulfanyl-L-cysteine + a uridine in tRNA + 2 reduced [2Fe-2S]-[ferredoxin] + ATP + H(+) = [ThiI sulfur-carrier protein]-L-cysteine + a 4-thiouridine in tRNA + 2 oxidized [2Fe-2S]-[ferredoxin] + AMP + diphosphate. The enzyme catalyses [ThiS sulfur-carrier protein]-C-terminal Gly-Gly-AMP + S-sulfanyl-L-cysteinyl-[cysteine desulfurase] + AH2 = [ThiS sulfur-carrier protein]-C-terminal-Gly-aminoethanethioate + L-cysteinyl-[cysteine desulfurase] + A + AMP + 2 H(+). It participates in cofactor biosynthesis; thiamine diphosphate biosynthesis. Catalyzes the ATP-dependent transfer of a sulfur to tRNA to produce 4-thiouridine in position 8 of tRNAs, which functions as a near-UV photosensor. Also catalyzes the transfer of sulfur to the sulfur carrier protein ThiS, forming ThiS-thiocarboxylate. This is a step in the synthesis of thiazole, in the thiamine biosynthesis pathway. The sulfur is donated as persulfide by IscS. This is Probable tRNA sulfurtransferase from Lysinibacillus sphaericus (strain C3-41).